A 183-amino-acid polypeptide reads, in one-letter code: UPF0398 protein LSL_0930 (183 aa).

It belongs to the UPF0398 family.

The protein is UPF0398 protein LSL_0930 of Ligilactobacillus salivarius (strain UCC118) (Lactobacillus salivarius).